Reading from the N-terminus, the 309-residue chain is MDQHTLDVEDTADARHPAGTSCPSDAALLRDTGLLADAALLSDTVRPTNAALPTDAAYPAVNVRDREAAWPPALNFCSRHPKLYGLVALVLLLLIAACVPIFTRTEPRPALTITTSPNLGTRENNADQVTPVSHIGCPNTTQQGSPVFAKLLAKNQASLCNTTLNWHSQDGAGSSYLSQGLRYEEDKKELVVDSPGLYYVFLELKLSPTFTNTGHKVQGWVSLVLQAKPQVDDFDNLALTVELFPCSMENKLVDRSWSQLLLLKAGHRLSVGLRAYLHGAQDAYRDWELSYPNTTSFGLFLVKPDNPWE.

The segment covering 1-16 has biased composition (basic and acidic residues); the sequence is MDQHTLDVEDTADARH. The tract at residues 1-20 is disordered; the sequence is MDQHTLDVEDTADARHPAGT. The Cytoplasmic segment spans residues 1–82; sequence MDQHTLDVED…ALNFCSRHPK (82 aa). A helical; Signal-anchor for type II membrane protein membrane pass occupies residues 83-103; that stretch reads LYGLVALVLLLLIAACVPIFT. Residues 104–309 are Extracellular-facing; that stretch reads RTEPRPALTI…FLVKPDNPWE (206 aa). Asn139, Asn161, and Asn293 each carry an N-linked (GlcNAc...) asparagine glycan. The 156-residue stretch at 147–302 folds into the THD domain; that stretch reads VFAKLLAKNQ…NTTSFGLFLV (156 aa).

The protein belongs to the tumor necrosis factor family. As to quaternary structure, homotrimer.

The protein localises to the membrane. Cytokine that binds to TNFRSF9. Induces the proliferation of activated peripheral blood T-cells. May have a role in activation-induced cell death (AICD). May play a role in cognate interactions between T-cells and B-cells/macrophages. The chain is Tumor necrosis factor ligand superfamily member 9 (Tnfsf9) from Mus musculus (Mouse).